Reading from the N-terminus, the 89-residue chain is Small ribosomal subunit protein uS15 (89 aa).

This sequence belongs to the universal ribosomal protein uS15 family. In terms of assembly, part of the 30S ribosomal subunit. Forms a bridge to the 50S subunit in the 70S ribosome, contacting the 23S rRNA.

One of the primary rRNA binding proteins, it binds directly to 16S rRNA where it helps nucleate assembly of the platform of the 30S subunit by binding and bridging several RNA helices of the 16S rRNA. Functionally, forms an intersubunit bridge (bridge B4) with the 23S rRNA of the 50S subunit in the ribosome. The chain is Small ribosomal subunit protein uS15 from Prochlorococcus marinus (strain MIT 9515).